The primary structure comprises 439 residues: Glutamate--tRNA ligase 2 (439 aa).

The short motif at 9-19 (PSPTGHLHVGN) is the 'HIGH' region element. Positions 233-237 (KLSKR) match the 'KMSKS' region motif. Lys236 contacts ATP.

It belongs to the class-I aminoacyl-tRNA synthetase family. Glutamate--tRNA ligase type 1 subfamily. Monomer.

It localises to the cytoplasm. The enzyme catalyses tRNA(Glu) + L-glutamate + ATP = L-glutamyl-tRNA(Glu) + AMP + diphosphate. Catalyzes the attachment of glutamate to tRNA(Glu) in a two-step reaction: glutamate is first activated by ATP to form Glu-AMP and then transferred to the acceptor end of tRNA(Glu). The polypeptide is Glutamate--tRNA ligase 2 (Sphingopyxis alaskensis (strain DSM 13593 / LMG 18877 / RB2256) (Sphingomonas alaskensis)).